The following is a 225-amino-acid chain: Cytidylate kinase (225 aa).

11–19 is an ATP binding site; that stretch reads GPAAAGKST.

This sequence belongs to the cytidylate kinase family. Type 1 subfamily.

The protein resides in the cytoplasm. It catalyses the reaction CMP + ATP = CDP + ADP. It carries out the reaction dCMP + ATP = dCDP + ADP. The chain is Cytidylate kinase from Bacillus cereus (strain B4264).